A 371-amino-acid chain; its full sequence is Aspartate-semialdehyde dehydrogenase (371 aa).

Residues 10–13 (RGMV), 37–38 (TS), and Gln-74 contribute to the NADP(+) site. Arg-103 contributes to the phosphate binding site. The Acyl-thioester intermediate role is filled by Cys-136. Gln-163 provides a ligand contact to substrate. Ser-166 is an NADP(+) binding site. Residue Glu-243 coordinates substrate. Lys-246 contributes to the phosphate binding site. Position 270 (Arg-270) interacts with substrate. His-277 functions as the Proton acceptor in the catalytic mechanism. NADP(+) is bound at residue Gln-353.

It belongs to the aspartate-semialdehyde dehydrogenase family. In terms of assembly, homodimer.

The enzyme catalyses L-aspartate 4-semialdehyde + phosphate + NADP(+) = 4-phospho-L-aspartate + NADPH + H(+). It functions in the pathway amino-acid biosynthesis; L-lysine biosynthesis via DAP pathway; (S)-tetrahydrodipicolinate from L-aspartate: step 2/4. It participates in amino-acid biosynthesis; L-methionine biosynthesis via de novo pathway; L-homoserine from L-aspartate: step 2/3. Its pathway is amino-acid biosynthesis; L-threonine biosynthesis; L-threonine from L-aspartate: step 2/5. Functionally, catalyzes the NADPH-dependent formation of L-aspartate-semialdehyde (L-ASA) by the reductive dephosphorylation of L-aspartyl-4-phosphate. The polypeptide is Aspartate-semialdehyde dehydrogenase (Haemophilus influenzae (strain ATCC 51907 / DSM 11121 / KW20 / Rd)).